The sequence spans 81 residues: ATP synthase subunit c (81 aa).

Helical transmembrane passes span 7–27 (AASVLAAALAVGLAAIGPGIG) and 57–77 (LAFMEALTIYGLVVALVLLFA).

This sequence belongs to the ATPase C chain family. As to quaternary structure, F-type ATPases have 2 components, F(1) - the catalytic core - and F(0) - the membrane proton channel. F(1) has five subunits: alpha(3), beta(3), gamma(1), delta(1), epsilon(1). F(0) has four main subunits: a(1), b(1), b'(1) and c(10-14). The alpha and beta chains form an alternating ring which encloses part of the gamma chain. F(1) is attached to F(0) by a central stalk formed by the gamma and epsilon chains, while a peripheral stalk is formed by the delta, b and b' chains.

The protein resides in the cellular thylakoid membrane. Functionally, f(1)F(0) ATP synthase produces ATP from ADP in the presence of a proton or sodium gradient. F-type ATPases consist of two structural domains, F(1) containing the extramembraneous catalytic core and F(0) containing the membrane proton channel, linked together by a central stalk and a peripheral stalk. During catalysis, ATP synthesis in the catalytic domain of F(1) is coupled via a rotary mechanism of the central stalk subunits to proton translocation. Key component of the F(0) channel; it plays a direct role in translocation across the membrane. A homomeric c-ring of between 10-14 subunits forms the central stalk rotor element with the F(1) delta and epsilon subunits. This Nostoc sp. (strain PCC 7120 / SAG 25.82 / UTEX 2576) protein is ATP synthase subunit c.